The primary structure comprises 263 residues: Indole-3-glycerol phosphate synthase (263 aa).

This sequence belongs to the TrpC family.

The enzyme catalyses 1-(2-carboxyphenylamino)-1-deoxy-D-ribulose 5-phosphate + H(+) = (1S,2R)-1-C-(indol-3-yl)glycerol 3-phosphate + CO2 + H2O. It functions in the pathway amino-acid biosynthesis; L-tryptophan biosynthesis; L-tryptophan from chorismate: step 4/5. The chain is Indole-3-glycerol phosphate synthase from Acidithiobacillus ferrooxidans (strain ATCC 23270 / DSM 14882 / CIP 104768 / NCIMB 8455) (Ferrobacillus ferrooxidans (strain ATCC 23270)).